Consider the following 124-residue polypeptide: CLAVATA3/ESR (CLE)-related protein 45 (124 aa).

The N-terminal stretch at 1-20 (MLGSSTRSMFFLLVCIGLLA) is a signal peptide. Residues Asn-25 and Asn-96 are each glycosylated (N-linked (GlcNAc...) asparagine). Residues 71–109 (LNKNRRVLEEVNKDKIKAEETQERKNKTEDSFKSSKRRV) are a coiled coil. A compositionally biased stretch (basic and acidic residues) spans 87-103 (KAEETQERKNKTEDSFK). A disordered region spans residues 87–124 (KAEETQERKNKTEDSFKSSKRRVRRGSDPIHNKAQPFS).

It belongs to the CLV3/ESR signal peptide family. Binds to SKM1 present in the pollen grain, particularly under relatively high temperature (at 30 degrees Celsius). Interacts with BAM3, especially in roots. In terms of tissue distribution, expressed at low levels in flowers, especially in pistils. Present in vascular tissues. In roots, confined to protophloem and sieve element precursor cells.

It localises to the secreted. The protein resides in the extracellular space. Functionally, extracellular signal peptide that regulates cell fate. Represses root apical meristem maintenance. Represses protophloem differentiation in a BAM3-dependent manner. BRX, BAM3, and CLE45 act together to regulate the transition of protophloem cells from proliferation to differentiation, thus impinging on postembryonic growth capacity of the root meristem; this signaling pathway requires CRN and CLV2 and involves MAKR5 for its transduction/amplification. Triggers the accumulation of MAKR5 in developing sieve elements in a BAM3-dependent manner. Prevents, in a dose-dependent manner, auxin response in the root meristem thus leading in the repression of protophloem differentiation and periclinal sieve element precursor cell division. Promotes pollen tube growth prolongation in a SKM1 and SKM2-dependent manner, especially under relatively high temperature (at 30 degrees Celsius), thus conferring tolerance against high temperature probably through the maintenance of mitochondrial activity. Alleviates mitochondrial decay pollen tube in vitro culture. This chain is CLAVATA3/ESR (CLE)-related protein 45, found in Arabidopsis thaliana (Mouse-ear cress).